The sequence spans 225 residues: Protein-L-isoaspartate O-methyltransferase (225 aa).

Residue serine 75 is part of the active site.

The protein belongs to the methyltransferase superfamily. L-isoaspartyl/D-aspartyl protein methyltransferase family.

Its subcellular location is the cytoplasm. The enzyme catalyses [protein]-L-isoaspartate + S-adenosyl-L-methionine = [protein]-L-isoaspartate alpha-methyl ester + S-adenosyl-L-homocysteine. Functionally, catalyzes the methyl esterification of L-isoaspartyl residues in peptides and proteins that result from spontaneous decomposition of normal L-aspartyl and L-asparaginyl residues. It plays a role in the repair and/or degradation of damaged proteins. The chain is Protein-L-isoaspartate O-methyltransferase from Xanthomonas axonopodis pv. citri (strain 306).